Reading from the N-terminus, the 227-residue chain is Ubiquitin carboxyl-terminal hydrolase (227 aa).

One can recognise a UCH catalytic domain in the interval 3–224; it reads TWTPLESNPE…VRFTVLALTA (222 aa). Cys93 acts as the Nucleophile in catalysis. The active-site Proton donor is His164.

This sequence belongs to the peptidase C12 family.

It catalyses the reaction Thiol-dependent hydrolysis of ester, thioester, amide, peptide and isopeptide bonds formed by the C-terminal Gly of ubiquitin (a 76-residue protein attached to proteins as an intracellular targeting signal).. Its function is as follows. Ubiquitin-protein hydrolase is involved both in the processing of ubiquitin precursors and of ubiquitinated proteins. This enzyme is a thiol protease that recognizes and hydrolyzes a peptide bond at the C-terminal glycine of ubiquitin. This is Ubiquitin carboxyl-terminal hydrolase (Uch) from Drosophila melanogaster (Fruit fly).